Here is a 548-residue protein sequence, read N- to C-terminus: Membrane protein insertase YidC (548 aa).

A helical membrane pass occupies residues 6 to 26; the sequence is NLLVIALLFVSFMIWQAWEQD. A disordered region spans residues 28 to 56; that stretch reads NPQPQTQQTTQTTTTAAGSAADQGVPASG. Over residues 29 to 42 the composition is skewed to low complexity; it reads PQPQTQQTTQTTTT. 4 helical membrane passes run 350 to 370, 424 to 444, 458 to 478, and 499 to 519; these read FVGNWGFSIIIITFIVRGIMY, FPLIIQMPIFLALYYMLMGSI, LSAQDPYYILPILMGVTMFFI, and PVIFTVFFLWFPSGLVLYYIV.

It belongs to the OXA1/ALB3/YidC family. Type 1 subfamily. As to quaternary structure, interacts with the Sec translocase complex via SecD. Specifically interacts with transmembrane segments of nascent integral membrane proteins during membrane integration.

The protein resides in the cell inner membrane. Functionally, required for the insertion and/or proper folding and/or complex formation of integral membrane proteins into the membrane. Involved in integration of membrane proteins that insert both dependently and independently of the Sec translocase complex, as well as at least some lipoproteins. Aids folding of multispanning membrane proteins. The sequence is that of Membrane protein insertase YidC from Salmonella enteritidis PT4 (strain P125109).